We begin with the raw amino-acid sequence, 991 residues long: Pentatricopeptide repeat-containing protein At1g73710 (991 aa).

Disordered regions lie at residues 1–27 (MLQP…HHHH) and 61–81 (SSSS…RKRK). The segment covering 15-27 (VRHHHHHHHHHHH) has biased composition (basic residues). Over residues 61–73 (SSSSVSPPRCSKP) the composition is skewed to low complexity. PPR repeat units lie at residues 144-178 (NVIH…GVLP), 179-213 (TNNT…MHFP), 214-248 (DEVT…KVDL), 304-338 (LTST…GVPI), 339-373 (DTVT…GISP), 374-408 (DTKT…GLFP), 409-443 (DTVT…SIRI), 444-474 (DEHS…FQLD), 478-513 (SSTT…GQRN), 514-548 (DVLE…GTWP), 549-583 (DECT…GCKP), 584-618 (GCKT…GVKP), 619-653 (NEVV…GVQS), 654-688 (NHIV…EGGP), 689-719 (DVAA…LREK), 723-757 (DVIS…GLLS), 758-792 (DCTS…RKLL), 862-896 (EHFA…GLEP), and 897-931 (DIVT…ELEP). Residues 965–974 (AERECSSRSG) are compositionally biased toward basic and acidic residues. The interval 965 to 991 (AERECSSRSGEEEEDDEEENSEEDEAF) is disordered. Residues 975–991 (EEEEDDEEENSEEDEAF) are compositionally biased toward acidic residues.

It belongs to the PPR family. P subfamily.

This is Pentatricopeptide repeat-containing protein At1g73710 from Arabidopsis thaliana (Mouse-ear cress).